The sequence spans 369 residues: Nudix hydrolase 8 (369 aa).

Residues 188-318 form the Nudix hydrolase domain; sequence SHQVGVGGFV…GDKMFKRVIE (131 aa). A Nudix box motif is present at residues 225–246; the sequence is GFINESEEIFSGAVREVKEETG. Mg(2+) contacts are provided by Glu240 and Glu244.

Belongs to the Nudix hydrolase family. Requires Mg(2+) as cofactor. Mn(2+) is required as a cofactor. Expressed in roots, stems and, at lower level, leaves.

In terms of biological role, probably mediates the hydrolysis of some nucleoside diphosphate derivatives. May be involved in plant immunity and act as a positive regulator of defense response through salicylic acid (SA) signaling. The chain is Nudix hydrolase 8 (NUDT8) from Arabidopsis thaliana (Mouse-ear cress).